We begin with the raw amino-acid sequence, 196 residues long: uncharacterized protein (196 aa).

An N-terminal signal peptide occupies residues 1 to 27; the sequence is MSVLSRAVQLAFVALGLCLFFSNLVAA.

The protein localises to the secreted. This is an uncharacterized protein from Arthroderma benhamiae (strain ATCC MYA-4681 / CBS 112371) (Trichophyton mentagrophytes).